We begin with the raw amino-acid sequence, 337 residues long: Histidine N-acetyltransferase (337 aa).

A propeptide spans 1–2 (MK) (removed in mature form). The N-acetyltransferase domain maps to 21 to 156 (LQFAVATEED…QGILLVRFRA (136 aa)).

It carries out the reaction L-histidine + acetyl-CoA = N(alpha)-acetyl-L-histidine + CoA + H(+). Enzyme responsible for the N-acetyl-histidine (NAH) synthesis, which is a major constituent of brain and lens of ectothermic vertebrates. In Scomber australasicus (Blue mackerel), this protein is Histidine N-acetyltransferase (hisat).